The primary structure comprises 240 residues: MKFSIITLFPKIINSYIEESIIKRAINKQAIKIEIIDLRNFSTLSHNQVDDYQYGGGSGMVLMIEPLIKAIESVKTTKSIVLLTTPQGKTLNQSIVKTYANNYEHIIIVCGHYEGYDERVLDYIDDEISIGDYVITGGELASLILVDSISRLLPNVIKQESHENESFENNLLDHPVYTKPYEFRNKKVPDVLLSGHHQNIKKWREEQQVIKTLKKRPDLIDITKLNRHQLEIYKKMKGEQ.

Residues G111 and 130 to 135 (IGDYVI) contribute to the S-adenosyl-L-methionine site.

It belongs to the RNA methyltransferase TrmD family. In terms of assembly, homodimer.

Its subcellular location is the cytoplasm. It catalyses the reaction guanosine(37) in tRNA + S-adenosyl-L-methionine = N(1)-methylguanosine(37) in tRNA + S-adenosyl-L-homocysteine + H(+). Its function is as follows. Specifically methylates guanosine-37 in various tRNAs. The chain is tRNA (guanine-N(1)-)-methyltransferase from Mycoplasma mycoides subsp. mycoides SC (strain CCUG 32753 / NCTC 10114 / PG1).